The chain runs to 542 residues: Phosphoacetylglucosamine mutase 2 (542 aa).

Residue S77 is the Phosphoserine intermediate of the active site. S77 lines the Mg(2+) pocket. Phosphoserine occurs at positions 77 and 82. The Mg(2+) site is built by D292, D294, and D296. Substrate is bound by residues E385–N387, R510–T514, and R519.

The protein belongs to the phosphohexose mutase family. Requires Mg(2+) as cofactor.

It localises to the cytoplasm. Its subcellular location is the nucleus. The enzyme catalyses N-acetyl-alpha-D-glucosamine 1-phosphate = N-acetyl-D-glucosamine 6-phosphate. It functions in the pathway nucleotide-sugar biosynthesis; UDP-N-acetyl-alpha-D-glucosamine biosynthesis; N-acetyl-alpha-D-glucosamine 1-phosphate from alpha-D-glucosamine 6-phosphate (route I): step 2/2. In terms of biological role, catalyzes the conversion of GlcNAc-6-P into GlcNAc-1-P during the synthesis of uridine diphosphate/UDP-GlcNAc, which is a biosynthetic precursor of chitin and also supplies the amino sugars for N-linked oligosaccharides of glycoproteins. This is Phosphoacetylglucosamine mutase 2 from Schizosaccharomyces pombe (strain 972 / ATCC 24843) (Fission yeast).